A 349-amino-acid chain; its full sequence is Hypoxia-inducible factor 1-alpha inhibitor (349 aa).

Residues 1–10 show a composition bias toward low complexity; the sequence is MAATAAEAVA. The interval 1 to 51 is disordered; that stretch reads MAATAAEAVASGSGEPREEAGALGPAWDESQLRSYSFPTRPIPRLSQSDPR. Ala2 bears the N-acetylalanine mark. An interaction with VHL region spans residues 2–125; sequence AATAAEAVAS…PRSNREEMKF (124 aa). One can recognise a JmjC domain in the interval 142–312; the sequence is ERLYLQQTLN…PKRIEYPLKA (171 aa). Tyr145 is a 2-oxoglutarate binding site. Substrate is bound by residues Asp152 and 181 to 183; that span reads QLT. Thr196 serves as a coordination point for 2-oxoglutarate. His199 and Asp201 together coordinate Fe cation. 201–203 serves as a coordination point for substrate; that stretch reads DEQ. 2-oxoglutarate is bound by residues Asn205 and Lys214. 238–239 serves as a coordination point for substrate; sequence RQ. His279 is a binding site for Fe cation. A 2-oxoglutarate-binding site is contributed by Asn294. Substrate contacts are provided by Ala300 and Asn321.

Homodimer; homodimerization is essential for catalytic activity. Interacts with VHL and HIF1A. Part of a complex with VHL, HIF1A and HDAC1 or HDAC2 or HDAC3. Interacts with NFKB1 and NFKBIA. Interacts with NOTCH1, NOTCH2 and NOTCH3 but not with NOTCH4. Interacts with APBA3; binding inhibits HIF1AN binding to HIF1A. Interacts with TNKS2. Interacts with PPP1R12A. Interacts with ASB4. Interacts with UBE3A. Interacts with ANKS3. Interacts with NECAB3; the interaction is indirect and seems to be mediated by APBA3. Fe(2+) is required as a cofactor.

Its subcellular location is the nucleus. The protein localises to the cytoplasm. It is found in the perinuclear region. It carries out the reaction L-asparaginyl-[hypoxia-inducible factor alpha subunit] + 2-oxoglutarate + O2 = (3S)-3-hydroxy-L-asparaginyl-[hypoxia-inducible factor alpha subunit] + succinate + CO2. It catalyses the reaction L-histidyl-[ankyrin-repeat domain protein] + 2-oxoglutarate + O2 = (3S)-3-hydroxy-L-histidyl-[ankyrin-repeat domain protein] + succinate + CO2. The enzyme catalyses L-asparaginyl-[ankyrin-repeat domain protein] + 2-oxoglutarate + O2 = (3S)-3-hydroxy-L-asparaginyl-[ankyrin-repeat domain protein] + succinate + CO2. The catalysed reaction is L-aspartyl-[ankyrin-repeat domain protein] + 2-oxoglutarate + O2 = (3S)-3-hydroxy-L-aspartyl-[ankyrin-repeat domain protein] + succinate + CO2. Functionally, hydroxylates HIF-1 alpha at 'Asn-803' in the C-terminal transactivation domain (CAD). Functions as an oxygen sensor and, under normoxic conditions, the hydroxylation prevents interaction of HIF-1 with transcriptional coactivators including Cbp/p300-interacting transactivator. Involved in transcriptional repression through interaction with HIF1A, VHL and histone deacetylases. Hydroxylates specific Asn residues within ankyrin repeat domains (ARD) of NFKB1, NFKBIA, NOTCH1, ASB4, PPP1R12A and several other ARD-containing proteins. Also hydroxylates Asp and His residues within ARDs of ANK1 and TNKS2, respectively. Negatively regulates NOTCH1 activity, accelerating myogenic differentiation. Positively regulates ASB4 activity, promoting vascular differentiation. In Homo sapiens (Human), this protein is Hypoxia-inducible factor 1-alpha inhibitor (HIF1AN).